The sequence spans 738 residues: Catalase-peroxidase 2 (738 aa).

A signal peptide spans 1-26; it reads MKRTLPTLSALALSMSLALAAGQTQA. Positions 104–226 form a cross-link, tryptophyl-tyrosyl-methioninium (Trp-Tyr) (with M-252); it reads WHSAGVYRIF…LGATQMGLIY (123 aa). His105 acts as the Proton acceptor in catalysis. Positions 226–252 form a cross-link, tryptophyl-tyrosyl-methioninium (Tyr-Met) (with W-104); sequence YVNPEGPNGVPDPLAAARDIRETFGRM. His267 provides a ligand contact to heme b.

The protein belongs to the peroxidase family. Peroxidase/catalase subfamily. In terms of assembly, homodimer or homotetramer. Requires heme b as cofactor. Formation of the three residue Trp-Tyr-Met cross-link is important for the catalase, but not the peroxidase activity of the enzyme.

It carries out the reaction H2O2 + AH2 = A + 2 H2O. It catalyses the reaction 2 H2O2 = O2 + 2 H2O. Functionally, bifunctional enzyme with both catalase and broad-spectrum peroxidase activity. The chain is Catalase-peroxidase 2 from Shewanella amazonensis (strain ATCC BAA-1098 / SB2B).